The chain runs to 431 residues: C2H2 type master regulator of conidiophore development brlA (431 aa).

3 disordered regions span residues 29–51 (MTSS…SHGS), 211–275 (TPQQ…SEEY), and 287–306 (IRTH…VRSN). A compositionally biased stretch (low complexity) spans 30-48 (TSSFSPLESPTPTPTSLYS). Residues 225-265 (PSSNYSDFPASLQTFKPHTPSTPVRSLSLGTPRSDTPQSRM) show a composition bias toward polar residues. Over residues 287–302 (IRTHRQPSRKPSKKQL) the composition is skewed to basic residues. 2 C2H2-type zinc fingers span residues 321-345 (FKCK…MKSH) and 351-376 (HVCW…TKTH). Positions 390–412 (DETSPDYDPEFRGQLTPDGRPIY) are disordered.

The protein localises to the nucleus. Its function is as follows. BrlA, abaA and wetA are pivotal regulators of conidiophore development and conidium maturation. They act individually and together to regulate their own expression and that of numerous other sporulation-specific genes. Binds promoters of target genes at brlA response elements (BREs) containing the conserved sequence 5'-(C/A)(A/G)AGGG(G/A)-3'. Regulates the expression levels of seven secondary metabolism gene clusters including a down-regulated cluster putatively involved in the biosynthesis of the mycotoxins roquefortine C and meleagrin. Negatively regulates the expression of cellulase genes. The sequence is that of C2H2 type master regulator of conidiophore development brlA from Penicillium oxalicum (strain 114-2 / CGMCC 5302) (Penicillium decumbens).